The chain runs to 345 residues: 4-hydroxy-2-oxovalerate aldolase 3 (345 aa).

Residues 8-260 enclose the Pyruvate carboxyltransferase domain; that stretch reads ITVHDMTLRD…ETGVDVWKIQ (253 aa). 16–17 is a substrate binding site; the sequence is RD. D17 contacts Mn(2+). The active-site Proton acceptor is H20. Substrate is bound by residues S170 and H199. Mn(2+)-binding residues include H199 and H201. Y290 contributes to the substrate binding site.

The protein belongs to the 4-hydroxy-2-oxovalerate aldolase family.

The catalysed reaction is (S)-4-hydroxy-2-oxopentanoate = acetaldehyde + pyruvate. In Comamonas testosteroni (Pseudomonas testosteroni), this protein is 4-hydroxy-2-oxovalerate aldolase 3 (aphG).